Here is a 372-residue protein sequence, read N- to C-terminus: Aminomethyltransferase (372 aa).

It belongs to the GcvT family. The glycine cleavage system is composed of four proteins: P, T, L and H.

It catalyses the reaction N(6)-[(R)-S(8)-aminomethyldihydrolipoyl]-L-lysyl-[protein] + (6S)-5,6,7,8-tetrahydrofolate = N(6)-[(R)-dihydrolipoyl]-L-lysyl-[protein] + (6R)-5,10-methylene-5,6,7,8-tetrahydrofolate + NH4(+). In terms of biological role, the glycine cleavage system catalyzes the degradation of glycine. This Synechococcus elongatus (strain ATCC 33912 / PCC 7942 / FACHB-805) (Anacystis nidulans R2) protein is Aminomethyltransferase.